Reading from the N-terminus, the 408-residue chain is Repulsive guidance molecule B homolog drag-1 (408 aa).

An N-terminal signal peptide occupies residues M1–C22. The Extracellular segment spans residues R23–S387. N60, N134, N183, and N376 each carry an N-linked (GlcNAc...) asparagine glycan. Residues K388–C408 form a helical membrane-spanning segment.

It belongs to the repulsive guidance molecule (RGM) family. Interacts with unc-40 (via FN6 domain), dbl-1 and sma-6. As to expression, expressed in pharyngeal, hypodermal and intestinal cells.

The protein localises to the cell membrane. Probably in association with the cell surface receptor unc-40, positively modulates the BMP-like Sma/Mab signaling pathway through interaction with both the ligand dbl-1 and its type I receptor sma-6. Regulates body size and this may be through modulation of the Sma/Mab signaling pathway. This is Repulsive guidance molecule B homolog drag-1 from Caenorhabditis elegans.